A 231-amino-acid polypeptide reads, in one-letter code: Chromosome partition protein MukE (231 aa).

The disordered stretch occupies residues 211–231 (SLLADEEEQDYNEQAELEGEA). Residues 214 to 231 (ADEEEQDYNEQAELEGEA) are compositionally biased toward acidic residues.

It belongs to the MukE family. In terms of assembly, interacts, and probably forms a ternary complex, with MukF and MukB. The complex formation is stimulated by calcium or magnesium.

It localises to the cytoplasm. The protein resides in the nucleoid. In terms of biological role, involved in chromosome condensation, segregation and cell cycle progression. May participate in facilitating chromosome segregation by condensation DNA from both sides of a centrally located replisome during cell division. Probably acts via its interaction with MukB and MukF. The polypeptide is Chromosome partition protein MukE (Vibrio vulnificus (strain CMCP6)).